The sequence spans 163 residues: 2-C-methyl-D-erythritol 2,4-cyclodiphosphate synthase (163 aa).

Positions 9 and 11 each coordinate a divalent metal cation. Residues 9–11 (DVH) and 36–37 (HS) each bind 4-CDP-2-C-methyl-D-erythritol 2-phosphate. His44 is a binding site for a divalent metal cation. Residues 58 to 60 (DIG), 63 to 67 (FPDDD), 134 to 137 (TTSE), Phe141, and Arg144 each bind 4-CDP-2-C-methyl-D-erythritol 2-phosphate.

Belongs to the IspF family. As to quaternary structure, homotrimer. The cofactor is a divalent metal cation.

The catalysed reaction is 4-CDP-2-C-methyl-D-erythritol 2-phosphate = 2-C-methyl-D-erythritol 2,4-cyclic diphosphate + CMP. Its pathway is isoprenoid biosynthesis; isopentenyl diphosphate biosynthesis via DXP pathway; isopentenyl diphosphate from 1-deoxy-D-xylulose 5-phosphate: step 4/6. Involved in the biosynthesis of isopentenyl diphosphate (IPP) and dimethylallyl diphosphate (DMAPP), two major building blocks of isoprenoid compounds. Catalyzes the conversion of 4-diphosphocytidyl-2-C-methyl-D-erythritol 2-phosphate (CDP-ME2P) to 2-C-methyl-D-erythritol 2,4-cyclodiphosphate (ME-CPP) with a corresponding release of cytidine 5-monophosphate (CMP). This chain is 2-C-methyl-D-erythritol 2,4-cyclodiphosphate synthase, found in Halorhodospira halophila (strain DSM 244 / SL1) (Ectothiorhodospira halophila (strain DSM 244 / SL1)).